The sequence spans 171 residues: Protein phosphatase 1 regulatory subunit 1A (171 aa).

Residue M1 is modified to N-acetylmethionine. The tract at residues 1-171 (MEPDNSPRKI…PLDSQGASLV (171 aa)) is disordered. Residues 9–12 (KIQF) are essential for activity. Residues 19–29 (PHLDPEAAEQI) show a composition bias toward basic and acidic residues. The residue at position 35 (T35) is a Phosphothreonine. The tract at residues 42–54 (TSDQSSPEIDEDR) is essential for activity. Residues S43, S46, S47, and S67 each carry the phosphoserine modification. The span at 122 to 146 (GSASRPDTPGTAQKSAESNPKTQEQ) shows a compositional bias: polar residues. Residues 143–171 (TQEQCGVEPRTEDSSAHMLPLDSQGASLV) form an interaction with PPP1R15A region.

It belongs to the protein phosphatase inhibitor 1 family. In terms of assembly, interacts with PPP1R15A. Post-translationally, phosphorylation of Thr-35 is required for activity.

Inhibitor of protein-phosphatase 1. This protein may be important in hormonal control of glycogen metabolism. Hormones that elevate intracellular cAMP increase I-1 activity in many tissues. I-1 activation may impose cAMP control over proteins that are not directly phosphorylated by PKA. Following a rise in intracellular calcium, I-1 is inactivated by calcineurin (or PP2B). Does not inhibit type-2 phosphatases. The protein is Protein phosphatase 1 regulatory subunit 1A (Ppp1r1a) of Mus musculus (Mouse).